A 303-amino-acid chain; its full sequence is Probable aspartoacylase (303 aa).

Zn(2+) contacts are provided by H13 and E16. Substrate-binding positions include R55 and 62–63 (NR). H104 contributes to the Zn(2+) binding site. Substrate-binding residues include E162 and Y273.

This sequence belongs to the AspA/AstE family. Aspartoacylase subfamily. Requires Zn(2+) as cofactor.

It catalyses the reaction an N-acyl-L-aspartate + H2O = a carboxylate + L-aspartate. This is Probable aspartoacylase from Parasynechococcus marenigrum (strain WH8102).